The chain runs to 286 residues: Polyamine aminopropyltransferase (286 aa).

Residues aspartate 3–lysine 240 form the PABS domain. Glutamine 32 provides a ligand contact to S-methyl-5'-thioadenosine. The spermidine site is built by histidine 63 and aspartate 87. S-methyl-5'-thioadenosine-binding positions include glutamate 107 and aspartate 139 to glycine 140. The active-site Proton acceptor is the aspartate 158. Aspartate 158–aspartate 161 serves as a coordination point for spermidine. Proline 165 is an S-methyl-5'-thioadenosine binding site.

This sequence belongs to the spermidine/spermine synthase family. In terms of assembly, homodimer or homotetramer.

The protein localises to the cytoplasm. It carries out the reaction S-adenosyl 3-(methylsulfanyl)propylamine + putrescine = S-methyl-5'-thioadenosine + spermidine + H(+). It participates in amine and polyamine biosynthesis; spermidine biosynthesis; spermidine from putrescine: step 1/1. Its function is as follows. Catalyzes the irreversible transfer of a propylamine group from the amino donor S-adenosylmethioninamine (decarboxy-AdoMet) to putrescine (1,4-diaminobutane) to yield spermidine. This Clostridium acetobutylicum (strain ATCC 824 / DSM 792 / JCM 1419 / IAM 19013 / LMG 5710 / NBRC 13948 / NRRL B-527 / VKM B-1787 / 2291 / W) protein is Polyamine aminopropyltransferase.